The primary structure comprises 143 residues: Large ribosomal subunit protein uL11 (143 aa).

The protein belongs to the universal ribosomal protein uL11 family. In terms of assembly, part of the ribosomal stalk of the 50S ribosomal subunit. Interacts with L10 and the large rRNA to form the base of the stalk. L10 forms an elongated spine to which L12 dimers bind in a sequential fashion forming a multimeric L10(L12)X complex. Post-translationally, one or more lysine residues are methylated.

Functionally, forms part of the ribosomal stalk which helps the ribosome interact with GTP-bound translation factors. This Koribacter versatilis (strain Ellin345) protein is Large ribosomal subunit protein uL11.